Consider the following 261-residue polypeptide: Ribonuclease HII (261 aa).

An RNase H type-2 domain is found at 71-259 (KYIAGVDEVG…VKEAKLHFDS (189 aa)). Residues aspartate 77, glutamate 78, and aspartate 169 each contribute to the a divalent metal cation site.

It belongs to the RNase HII family. It depends on Mn(2+) as a cofactor. Mg(2+) is required as a cofactor.

It localises to the cytoplasm. The enzyme catalyses Endonucleolytic cleavage to 5'-phosphomonoester.. Its function is as follows. Endonuclease that specifically degrades the RNA of RNA-DNA hybrids. This chain is Ribonuclease HII, found in Listeria monocytogenes serotype 4a (strain HCC23).